Reading from the N-terminus, the 506-residue chain is Glutamate--tRNA ligase (506 aa).

The short motif at 23–33 is the 'HIGH' region element; that stretch reads PSPTGTPHVGL. The 'KMSKS' region motif lies at 267 to 271; that stretch reads KLSKR. Residue lysine 270 participates in ATP binding.

The protein belongs to the class-I aminoacyl-tRNA synthetase family. Glutamate--tRNA ligase type 1 subfamily. In terms of assembly, monomer.

The protein resides in the cytoplasm. It catalyses the reaction tRNA(Glu) + L-glutamate + ATP = L-glutamyl-tRNA(Glu) + AMP + diphosphate. Functionally, catalyzes the attachment of glutamate to tRNA(Glu) in a two-step reaction: glutamate is first activated by ATP to form Glu-AMP and then transferred to the acceptor end of tRNA(Glu). This Clavibacter michiganensis subsp. michiganensis (strain NCPPB 382) protein is Glutamate--tRNA ligase.